The following is a 229-amino-acid chain: Glutamine amidotransferase-like class 1 domain-containing protein 1 (229 aa).

The signal sequence occupies residues 1–34 (MKKQGAPVSGGGTERLTKPSCLMVGSAVAEGVSA). N-linked (GlcNAc...) asparagine glycosylation is found at Asn-154 and Asn-212.

Belongs to the peptidase C56 family. In terms of assembly, homotetramer. Component of the FERRY complex.

It localises to the secreted. The protein localises to the early endosome. In terms of biological role, component of the FERRY complex (Five-subunit Endosomal Rab5 and RNA/ribosome intermediary). The FERRY complex directly interacts with mRNAs and RAB5A, and functions as a RAB5A effector involved in the localization and the distribution of specific mRNAs most likely by mediating their endosomal transport. The complex recruits mRNAs and ribosomes to early endosomes through direct mRNA-interaction. In Xenopus laevis (African clawed frog), this protein is Glutamine amidotransferase-like class 1 domain-containing protein 1.